A 173-amino-acid polypeptide reads, in one-letter code: MTYFVLFLGLCFVLGGLAVASKPSPYYGVVGLVLASVAGCGWLLSLGVSFVSLVLFMVYLGGMLVVFVYSVSLAADPFPEAWGDLGVVGYGVGFVMVLMVGMVVGGFVGSLDFGVVTVDSVGMFSVRLDFSGVAMFYSCGVGMFLVAGWGLLLTLFVVLELVRGLSRGAIRAV.

A run of 5 helical transmembrane segments spans residues 1–21 (MTYFVLFLGLCFVLGGLAVAS), 27–47 (YGVVGLVLASVAGCGWLLSLG), 48–68 (VSFVSLVLFMVYLGGMLVVFV), 87–107 (VVGYGVGFVMVLMVGMVVGGF), and 139–159 (CGVGMFLVAGWGLLLTLFVVL).

Belongs to the complex I subunit 6 family.

It localises to the mitochondrion membrane. The enzyme catalyses a ubiquinone + NADH + 5 H(+)(in) = a ubiquinol + NAD(+) + 4 H(+)(out). In terms of biological role, core subunit of the mitochondrial membrane respiratory chain NADH dehydrogenase (Complex I) that is believed to belong to the minimal assembly required for catalysis. Complex I functions in the transfer of electrons from NADH to the respiratory chain. The immediate electron acceptor for the enzyme is believed to be ubiquinone. In Aethia pusilla (Least auklet), this protein is NADH-ubiquinone oxidoreductase chain 6 (MT-ND6).